A 304-amino-acid polypeptide reads, in one-letter code: tRNA pseudouridine synthase B (304 aa).

Asp-38 acts as the Nucleophile in catalysis.

The protein belongs to the pseudouridine synthase TruB family. Type 1 subfamily.

The catalysed reaction is uridine(55) in tRNA = pseudouridine(55) in tRNA. Responsible for synthesis of pseudouridine from uracil-55 in the psi GC loop of transfer RNAs. The sequence is that of tRNA pseudouridine synthase B from Geobacter sulfurreducens (strain ATCC 51573 / DSM 12127 / PCA).